The following is a 255-amino-acid chain: Type III pantothenate kinase (255 aa).

6–13 (DVGNTNTV) is a binding site for ATP. Substrate-binding positions include tyrosine 100 and 107–110 (GADR). The active-site Proton acceptor is the aspartate 109. Aspartate 129 lines the K(+) pocket. Residue threonine 132 participates in ATP binding. A substrate-binding site is contributed by threonine 184.

This sequence belongs to the type III pantothenate kinase family. Homodimer. The cofactor is NH4(+). Requires K(+) as cofactor.

Its subcellular location is the cytoplasm. The catalysed reaction is (R)-pantothenate + ATP = (R)-4'-phosphopantothenate + ADP + H(+). It participates in cofactor biosynthesis; coenzyme A biosynthesis; CoA from (R)-pantothenate: step 1/5. Catalyzes the phosphorylation of pantothenate (Pan), the first step in CoA biosynthesis. This Acetivibrio thermocellus (strain ATCC 27405 / DSM 1237 / JCM 9322 / NBRC 103400 / NCIMB 10682 / NRRL B-4536 / VPI 7372) (Clostridium thermocellum) protein is Type III pantothenate kinase.